Reading from the N-terminus, the 59-residue chain is UPF0434 protein GOX0764 (59 aa).

This sequence belongs to the UPF0434 family.

The sequence is that of UPF0434 protein GOX0764 from Gluconobacter oxydans (strain 621H) (Gluconobacter suboxydans).